Consider the following 178-residue polypeptide: Putative metal-dependent hydrolase GTNG_0529 (178 aa).

Residues H68, H161, and H165 each contribute to the Zn(2+) site.

This sequence belongs to the metal hydrolase YfiT family. In terms of assembly, homodimer. Zn(2+) serves as cofactor.

The protein localises to the cytoplasm. Its function is as follows. Possible metal-dependent hydrolase. The protein is Putative metal-dependent hydrolase GTNG_0529 of Geobacillus thermodenitrificans (strain NG80-2).